Here is a 341-residue protein sequence, read N- to C-terminus: MVGRVQPDRKQLPLVLLRLLCLLPTGLPVRSVDFNRGTDNITVRQGDTAILRCVVEDKNSKVAWLNRSGIIFAGHDKWSLDPRVELEKRHALEYSLRIQKVDVYDEGSYTCSVQTQHEPKTSQVYLIVQVPPKISNISSDVTVNEGSNVTLVCMANGRPEPVITWRHLTPLGREFEGEEEYLEILGITREQSGKYECKAANEVSSADVKQVKVTVNYPPTITESKSNEATTGRQASLKCEASAVPAPDFEWYRDDTRINSANGLEIKSTEGQSSLTVTNVTEEHYGNYTCVAANKLGVTNASLVLFSKYAKTEPDSMQVIEFLHIDLKSIRHPLKVNPIQK.

Positions Met-1–Pro-28 are cleaved as a signal peptide. Ig-like domains lie at Val-29 to Ser-122, Pro-132 to Thr-214, and Pro-219 to Val-304. 2 N-linked (GlcNAc...) asparagine glycosylation sites follow: Asn-40 and Asn-66. Cys-53 and Cys-111 are joined by a disulfide. Phosphotyrosine is present on Tyr-94. Residues Asn-136 and Asn-148 are each glycosylated (N-linked (GlcNAc...) asparagine). Disulfide bonds link Cys-153-Cys-197 and Cys-239-Cys-290. 3 N-linked (GlcNAc...) asparagine glycosylation sites follow: Asn-279, Asn-287, and Asn-300.

It belongs to the immunoglobulin superfamily. IgLON family.

Its subcellular location is the cell membrane. Its function is as follows. Mediates selective neuronal growth and axon targeting. Contributes to the guidance of developing axons and remodeling of mature circuits in the limbic system. Essential for normal growth of the hippocampal mossy fiber projection. In Mus musculus (Mouse), this protein is Limbic system-associated membrane protein (Lsamp).